The sequence spans 303 residues: UDP-N-acetylenolpyruvoylglucosamine reductase (303 aa).

Residues 23–188 (KVGGPADYLV…ISAKFALKPG (166 aa)) enclose the FAD-binding PCMH-type domain. Arg167 is an active-site residue. The active-site Proton donor is the Ser217. Glu287 is an active-site residue.

It belongs to the MurB family. Requires FAD as cofactor.

It localises to the cytoplasm. It carries out the reaction UDP-N-acetyl-alpha-D-muramate + NADP(+) = UDP-N-acetyl-3-O-(1-carboxyvinyl)-alpha-D-glucosamine + NADPH + H(+). It participates in cell wall biogenesis; peptidoglycan biosynthesis. Its function is as follows. Cell wall formation. This chain is UDP-N-acetylenolpyruvoylglucosamine reductase, found in Streptococcus uberis (strain ATCC BAA-854 / 0140J).